A 79-amino-acid polypeptide reads, in one-letter code: Putative antitoxin MM_2475 (79 aa).

Belongs to the UPF0330 family.

Its function is as follows. Possibly the antitoxin component of a type II toxin-antitoxin (TA) system. In Methanosarcina mazei (strain ATCC BAA-159 / DSM 3647 / Goe1 / Go1 / JCM 11833 / OCM 88) (Methanosarcina frisia), this protein is Putative antitoxin MM_2475.